The primary structure comprises 937 residues: MAETLSGLGDASAAGAAAVSSAASETGTRRLSDLRVIDLRAELKKRNLDSSGNKSVLMERLKKAIEDEGGNPDEIEVTSECNKKMPKRPSKGRKPEDEGVEDNGLEENSGDGQEDVETSLENLQDMDMMDISVLDEADIDNGSVADCVEEEEEATLPEGLADSTELVEGDLKGLPEQLQEHAIDDKDTVNNVDTSSSDFTMLQEMEEASLEPENEKILDILGETCKSEPVKEEGSELEQPFAQATSSVGPDRKLAEEEDLFESCGHPEEEEEEEEEDQEEEQEEEGDLALASSSKSESPSTRCQWSEADAPLAVVKREPADAPGGGTGMDREPVGLEEPVEQSSTAAQLPEATSQELVRAPTAALSPEPQDSKEDVKKFAFDACNDVPAPPKESSASEGADQKMSSVEEDSDTKRLSREEKGRSSCGRNFWVSGLSSTTRATDLKNLFSRYGKVVGAKVVTNARSPGARCYGFVTMSTAEEATKCISHLHKTELHGKMISVEKAKSEPTGKRVPDRRDGDSKKEKASTSDRSANLKREEKGERKDDAKKTDDGSTEKSKDADDQKPGPSERSRTTKSGSRGTERTVVMDKSKGVPVISVKTSGSKERASKSQDRKSASREKRSVVSFDKVKESRKSRDSESRRERERSEREQRLQAQWEREERERLEIARERLAFHRHRLERERMERERLERERMHVEQERRREQERIHREREELRRQQELRYEQERRPAVRRPYEVDGRRDDAYWPEAKRAALDDRYHSDFSRQDRFHDFDHRDRGRYPNHSVDRREGSRSMMGDREGQHYPERHGGPERHGRDSRDGWGYGSNKRLSEGRGLPPPPRRDWGEHGRRLEDDRAWQGTADGGMMERDHKRWQGGERSMSGHSGPGHMMNRGGMSGRGSFAPGGASRGHVIPRGGMQAGFGGQSRGSRPSDARFTRRY.

The segment at 1–35 is disordered; sequence MAETLSGLGDASAAGAAAVSSAASETGTRRLSDLR. Position 2 is an N-acetylalanine (alanine 2). Over residues 11 to 24 the composition is skewed to low complexity; that stretch reads ASAAGAAAVSSAAS. Residues serine 24 and serine 55 each carry the phosphoserine modification. One can recognise an SAP domain in the interval 31–65; it reads LSDLRVIDLRAELKKRNLDSSGNKSVLMERLKKAI. A disordered region spans residues 64 to 117; the sequence is AIEDEGGNPDEIEVTSECNKKMPKRPSKGRKPEDEGVEDNGLEENSGDGQEDVE. Positions 67–77 are enriched in acidic residues; it reads DEGGNPDEIEV. A Phosphoserine modification is found at serine 79. Residues 98-117 show a composition bias toward acidic residues; sequence EGVEDNGLEENSGDGQEDVE. Residues lysine 172 and lysine 186 each participate in a glycyl lysine isopeptide (Lys-Gly) (interchain with G-Cter in SUMO2) cross-link. Threonine 188 carries the phosphothreonine modification. Phosphoserine occurs at positions 195, 197, and 209. Residues 222–429 are disordered; that stretch reads GETCKSEPVK…EKGRSSCGRN (208 aa). Residues 225 to 234 show a composition bias toward basic and acidic residues; sequence CKSEPVKEEG. Residue lysine 231 forms a Glycyl lysine isopeptide (Lys-Gly) (interchain with G-Cter in SUMO) linkage. Residues 268-287 are compositionally biased toward acidic residues; sequence EEEEEEEEEDQEEEQEEEGD. Lysine 316 participates in a covalent cross-link: Glycyl lysine isopeptide (Lys-Gly) (interchain with G-Cter in SUMO). Over residues 341 to 356 the composition is skewed to polar residues; it reads EQSSTAAQLPEATSQE. Residues 370-380 show a composition bias toward basic and acidic residues; that stretch reads QDSKEDVKKFA. Lysine 403 participates in a covalent cross-link: Glycyl lysine isopeptide (Lys-Gly) (interchain with G-Cter in SUMO2). A phosphoserine mark is found at serine 405 and serine 406. Over residues 412 to 423 the composition is skewed to basic and acidic residues; that stretch reads DTKRLSREEKGR. A Glycyl lysine isopeptide (Lys-Gly) (interchain with G-Cter in SUMO2) cross-link involves residue lysine 414. An RRM domain is found at 428–506; the sequence is RNFWVSGLSS…KMISVEKAKS (79 aa). Serine 437 bears the Phosphoserine mark. 2 stretches are compositionally biased toward basic and acidic residues: residues 499–573 and 581–592; these read ISVE…ERSR and GTERTVVMDKSK. 3 disordered regions span residues 499–661, 684–738, and 771–937; these read ISVE…WERE, RMER…YEVD, and FDHR…TRRY. Glycyl lysine isopeptide (Lys-Gly) (interchain with G-Cter in SUMO2) cross-links involve residues lysine 505, lysine 536, lysine 565, and lysine 592. Positions 550-814 are interaction with POLR2A; SFRS1; SFRS9 and SFRS10; the sequence is TDDGSTEKSK…RHGGPERHGR (265 aa). Lysine 600 participates in a covalent cross-link: Glycyl lysine isopeptide (Lys-Gly) (interchain with G-Cter in SUMO1); alternate. A Glycyl lysine isopeptide (Lys-Gly) (interchain with G-Cter in SUMO2); alternate cross-link involves residue lysine 600. A phosphoserine mark is found at serine 602, serine 604, serine 623, and serine 626. The span at 603 to 661 shows a compositional bias: basic and acidic residues; the sequence is GSKERASKSQDRKSASREKRSVVSFDKVKESRKSRDSESRRERERSEREQRLQAQWERE. The Nuclear localization signal signature appears at 621-638; it reads KRSVVSFDKVKESRKSRD. The segment at 621 to 937 is interaction with SAFB2; that stretch reads KRSVVSFDKV…PSDARFTRRY (317 aa). Residue lysine 629 is modified to N6-acetyllysine. Residues 652-726 are a coiled coil; it reads QRLQAQWERE…RQQELRYEQE (75 aa). Over residues 771–818 the composition is skewed to basic and acidic residues; sequence FDHRDRGRYPNHSVDRREGSRSMMGDREGQHYPERHGGPERHGRDSRD. Omega-N-methylarginine is present on arginine 832. Basic and acidic residues-rich tracts occupy residues 838–854 and 863–873; these read PRRD…DDRA and MMERDHKRWQG. Lysine 869 participates in a covalent cross-link: Glycyl lysine isopeptide (Lys-Gly) (interchain with G-Cter in SUMO2). An asymmetric dimethylarginine mark is found at arginine 890, arginine 896, arginine 906, and arginine 912. Basic and acidic residues predominate over residues 927–937; sequence RPSDARFTRRY.

In terms of assembly, monomer and homodimer. Forms heterodimers with SAFB2. Interacts with KHDRBS3. Interacts with CLK2. Interacts with POLR2A, ASF/SRSF1, SRp30c/SRFS9 and TRA2B/SFRS10. Interacts with SRPK1 and inhibits its activity. Interacts with RBMX. Interacts with FUS. Interacts with ZBED4. Sumoylated by PIAS1 with SUMO1 and SUMO2/3, desumoylated by SENP1. Sumoylation is required for transcriptional repressor activity.

It is found in the nucleus. Functionally, binds to scaffold/matrix attachment region (S/MAR) DNA and forms a molecular assembly point to allow the formation of a 'transcriptosomal' complex (consisting of SR proteins and RNA polymerase II) coupling transcription and RNA processing. Functions as an estrogen receptor corepressor and can also bind to the HSP27 promoter and decrease its transcription. Thereby acts as a negative regulator of cell proliferation. When associated with RBMX, binds to and stimulates transcription from the SREBF1 promoter. This is Scaffold attachment factor B1 (Safb) from Mus musculus (Mouse).